The chain runs to 502 residues: Xylulose kinase (502 aa).

82-83 (MH) is a binding site for substrate. Catalysis depends on Asp240, which acts as the Proton acceptor.

The protein belongs to the FGGY kinase family.

The enzyme catalyses D-xylulose + ATP = D-xylulose 5-phosphate + ADP + H(+). Its function is as follows. Catalyzes the phosphorylation of D-xylulose to D-xylulose 5-phosphate. The polypeptide is Xylulose kinase (Levilactobacillus brevis (Lactobacillus brevis)).